Consider the following 339-residue polypeptide: Mycothiol acetyltransferase (339 aa).

2 N-acetyltransferase domains span residues 8 to 174 (YEQL…QGLT) and 176 to 339 (LTYP…GELN). A 1D-myo-inositol 2-(L-cysteinylamino)-2-deoxy-alpha-D-glucopyranoside-binding site is contributed by glutamate 39. 85–87 (LAV) lines the acetyl-CoA pocket. 1D-myo-inositol 2-(L-cysteinylamino)-2-deoxy-alpha-D-glucopyranoside-binding residues include glutamate 207, lysine 254, and glutamate 270. Residue 274–276 (VCL) coordinates acetyl-CoA. A 1D-myo-inositol 2-(L-cysteinylamino)-2-deoxy-alpha-D-glucopyranoside-binding site is contributed by tyrosine 308.

This sequence belongs to the acetyltransferase family. MshD subfamily. As to quaternary structure, monomer.

The catalysed reaction is 1D-myo-inositol 2-(L-cysteinylamino)-2-deoxy-alpha-D-glucopyranoside + acetyl-CoA = mycothiol + CoA + H(+). Functionally, catalyzes the transfer of acetyl from acetyl-CoA to desacetylmycothiol (Cys-GlcN-Ins) to form mycothiol. The protein is Mycothiol acetyltransferase of Corynebacterium urealyticum (strain ATCC 43042 / DSM 7109).